Consider the following 212-residue polypeptide: ATP-dependent dethiobiotin synthetase BioD (212 aa).

12-17 (DCGKTF) contributes to the ATP binding site. Position 16 (Thr-16) interacts with Mg(2+). Lys-33 is an active-site residue. Ser-37 provides a ligand contact to substrate. ATP contacts are provided by residues Asp-50, 110-113 (EGAG), and 170-171 (NC). 2 residues coordinate Mg(2+): Asp-50 and Glu-110.

This sequence belongs to the dethiobiotin synthetase family. Homodimer. The cofactor is Mg(2+).

The protein resides in the cytoplasm. The enzyme catalyses (7R,8S)-7,8-diammoniononanoate + CO2 + ATP = (4R,5S)-dethiobiotin + ADP + phosphate + 3 H(+). It participates in cofactor biosynthesis; biotin biosynthesis; biotin from 7,8-diaminononanoate: step 1/2. Functionally, catalyzes a mechanistically unusual reaction, the ATP-dependent insertion of CO2 between the N7 and N8 nitrogen atoms of 7,8-diaminopelargonic acid (DAPA, also called 7,8-diammoniononanoate) to form a ureido ring. This Legionella pneumophila (strain Corby) protein is ATP-dependent dethiobiotin synthetase BioD.